The primary structure comprises 225 residues: Dimerizing cyclase tstC (225 aa).

The signal sequence occupies residues 1 to 19 (MRLSTLSSLLLGSSSIVFA). N146, N195, and N217 each carry an N-linked (GlcNAc...) asparagine glycan.

Belongs to the dimerizing cyclase tstC family.

It catalyses the reaction 2 [4-(deca-1,8-diyl)-2,5-dioxo-2,5-dihydro-3-furanyl]acetate + H(+) = 2-[(1R,8S,14R,15R)-11-hydroxy-14,15-bis[(6E)-oct-6-en-1-yl]-3,5,9-trioxo-4,10-dioxatetracyclo[9.4.0.0(2,6).0(8,12)]pentadeca-2(6),12-dien-8-yl]acetate + CO2. It participates in secondary metabolite biosynthesis. In terms of biological role, dimerizing cyclase; part of the gene cluster that mediates the biosynthesis of the antihypercholesterolemic agents phomoidrides which are dimeric anhydrides. Within the pathway, tstC produces the bicyclo[4.3.1]deca-1,6-diene core of phomoidrides via the dimerization of the monomeric anhydrides leading to prephomoidride. The pathway begins with the highly reducing polyketide synthase tstA that catalyzes the formation of a C12-fatty acyl-ACP, starting from one acetate and 5 malonate units. The hydrolase tstM is involved in the release of the C12-fatty acyl chain from phiA. The alkylcitrate synthase (ACS) tstJ and the alkylcitrate dehydratase (ACDH) tstI then give rise to decarboxylated monomeric anhydrides by coupling the C12-fatty acyl chain with oxalacetic acid. The cyclase tstC is responsible for the dimerization of the monomeric anhydrides which leads to the production of prephomoidride that contains the characteristic bicyclo[4.3.1]deca-1,6-diene system of phomoidrides. Iterative oxidation catalyzed by the alpha-ketoglutarate-dependent dioxygenase tstK produced then phomoidride A. Finally, the methyltransferase tstE converts phomoidride A to phomoidride B via an acetalization reaction. The phosphatidylethanolamine-binding protein tstB and tstN are not essential for dimerization and their functions have still to be determined. In Talaromyces stipitatus (strain ATCC 10500 / CBS 375.48 / QM 6759 / NRRL 1006) (Penicillium stipitatum), this protein is Dimerizing cyclase tstC.